Reading from the N-terminus, the 393-residue chain is Formate-dependent phosphoribosylglycinamide formyltransferase (393 aa).

N(1)-(5-phospho-beta-D-ribosyl)glycinamide contacts are provided by residues 22–23 (EL) and E82. Residues R114, K155, 160-165 (SSGKGQ), 195-198 (EGLV), and E203 contribute to the ATP site. The region spanning 119–308 (RLAAETLQLP…EFALHVRAFL (190 aa)) is the ATP-grasp domain. The Mg(2+) site is built by E267 and E279. N(1)-(5-phospho-beta-D-ribosyl)glycinamide contacts are provided by residues D286, K355, and 362 to 363 (RR).

The protein belongs to the PurK/PurT family. Homodimer.

It carries out the reaction N(1)-(5-phospho-beta-D-ribosyl)glycinamide + formate + ATP = N(2)-formyl-N(1)-(5-phospho-beta-D-ribosyl)glycinamide + ADP + phosphate + H(+). Its pathway is purine metabolism; IMP biosynthesis via de novo pathway; N(2)-formyl-N(1)-(5-phospho-D-ribosyl)glycinamide from N(1)-(5-phospho-D-ribosyl)glycinamide (formate route): step 1/1. Involved in the de novo purine biosynthesis. Catalyzes the transfer of formate to 5-phospho-ribosyl-glycinamide (GAR), producing 5-phospho-ribosyl-N-formylglycinamide (FGAR). Formate is provided by PurU via hydrolysis of 10-formyl-tetrahydrofolate. The sequence is that of Formate-dependent phosphoribosylglycinamide formyltransferase from Yersinia pseudotuberculosis serotype IB (strain PB1/+).